A 630-amino-acid polypeptide reads, in one-letter code: Alpha-1,3-mannosyltransferase MNT3 (630 aa).

Topologically, residues 1–14 are cytoplasmic; it reads MLKSLKSRRLILKR. A helical; Signal-anchor for type II membrane protein membrane pass occupies residues 15 to 31; that stretch reads LVTLLLSLFFSYLIFSA. At 32-630 the chain is on the lumenal side; that stretch reads SRNVTSSNKL…NDISRTWNAN (599 aa). N-linked (GlcNAc...) asparagine glycosylation is found at N34 and N168.

This sequence belongs to the MNN1/MNT family.

The protein localises to the golgi apparatus membrane. It functions in the pathway protein modification; protein glycosylation. Functionally, mannosyltransferase involved in adding the 4th and 5th mannose residues of O-linked glycans. This Saccharomyces cerevisiae (strain ATCC 204508 / S288c) (Baker's yeast) protein is Alpha-1,3-mannosyltransferase MNT3 (MNT3).